A 62-amino-acid polypeptide reads, in one-letter code: Large ribosomal subunit protein bL28 (62 aa).

The protein belongs to the bacterial ribosomal protein bL28 family.

This chain is Large ribosomal subunit protein bL28, found in Frankia casuarinae (strain DSM 45818 / CECT 9043 / HFP020203 / CcI3).